The chain runs to 351 residues: 3-dehydroquinate synthase (351 aa).

Residues 60–65 (DGEEYK), 94–98 (GVISD), 118–119 (TT), Lys-131, Lys-140, and 158–161 (FLKT) each bind NAD(+). Residues Glu-173, His-239, and His-256 each contribute to the Zn(2+) site.

It belongs to the sugar phosphate cyclases superfamily. Dehydroquinate synthase family. Co(2+) serves as cofactor. Zn(2+) is required as a cofactor. It depends on NAD(+) as a cofactor.

It is found in the cytoplasm. The enzyme catalyses 7-phospho-2-dehydro-3-deoxy-D-arabino-heptonate = 3-dehydroquinate + phosphate. It functions in the pathway metabolic intermediate biosynthesis; chorismate biosynthesis; chorismate from D-erythrose 4-phosphate and phosphoenolpyruvate: step 2/7. Catalyzes the conversion of 3-deoxy-D-arabino-heptulosonate 7-phosphate (DAHP) to dehydroquinate (DHQ). The sequence is that of 3-dehydroquinate synthase from Campylobacter jejuni subsp. jejuni serotype O:6 (strain 81116 / NCTC 11828).